A 297-amino-acid polypeptide reads, in one-letter code: Acetaldehyde dehydrogenase (297 aa).

18–21 (TGNI) serves as a coordination point for NAD(+). Cysteine 133 acts as the Acyl-thioester intermediate in catalysis. NAD(+) is bound by residues 165 to 173 (SAGPATRLN) and asparagine 275.

This sequence belongs to the acetaldehyde dehydrogenase family.

The enzyme catalyses acetaldehyde + NAD(+) + CoA = acetyl-CoA + NADH + H(+). This chain is Acetaldehyde dehydrogenase, found in Spirochaeta aurantia.